The chain runs to 601 residues: MKLTRDFPSNYTMAQWQPSDHQDAQVVGELFSHFGAERFTVQSTRTGVPVIWLARELLLDVVGFLRKLPSPFVMLYDLSATDERLRSHRDGLPQSDFTVFYHFISIDRNADVMLKVPLAESDLHLPTLTGHFPNANWYEREVWDLLGITFDGHPHLTRIMMPKSWQGHPLRKDYPARATEFDPFMLDAAKQDMEQENLLFKPEEWGMARGNENEDYMFLNLGPNHPSAHGAFRLVLQLDGEEIRNCVPDIGYHHRGAEKMGERQSWHSYIPYTDRVEYLGGVMNNLPYVLAVEKLAGIKVPNRVDVIRVMMAELFRIQSHLLFLGTYIQDVGAMTPVFFTFTDRQKIYTIIEAITGARMHPAWFRIGGVAHDLPKGWQRLVQDNLLSWLPKRLMDYEKAAMRNSILRGRTIGVSAYTTEQALAWGTTGAGLRATGLNFDVRKWRPYSGYDQFDFEVPVGSNGDAYDRATVRIEEIRQSLSIIEQCMKNMPEGPFKADHPLTTPPPKDRTLQDIETLITHFLQVSWGPVMPAAESFQMIEATKGINSYYLTSDGSTMSYRTRIRTPSFAHLQQIPSVIKGSMVSDLIVYLGSIDFVMSDVDR.

Positions 1–191 (MKLTRDFPSN…DPFMLDAAKQ (191 aa)) are NADH dehydrogenase I subunit C. Positions 215-601 (DYMFLNLGPN…IDFVMSDVDR (387 aa)) are NADH dehydrogenase I subunit D.

The protein in the N-terminal section; belongs to the complex I 30 kDa subunit family. This sequence in the C-terminal section; belongs to the complex I 49 kDa subunit family. NDH-1 is composed of 13 different subunits. Subunits NuoB, CD, E, F, and G constitute the peripheral sector of the complex.

The protein localises to the cell inner membrane. The catalysed reaction is a quinone + NADH + 5 H(+)(in) = a quinol + NAD(+) + 4 H(+)(out). Functionally, NDH-1 shuttles electrons from NADH, via FMN and iron-sulfur (Fe-S) centers, to quinones in the respiratory chain. The immediate electron acceptor for the enzyme in this species is believed to be ubiquinone. Couples the redox reaction to proton translocation (for every two electrons transferred, four hydrogen ions are translocated across the cytoplasmic membrane), and thus conserves the redox energy in a proton gradient. In Aeromonas salmonicida (strain A449), this protein is NADH-quinone oxidoreductase subunit C/D.